The sequence spans 281 residues: uncharacterized protein (281 aa).

3 helical membrane passes run 23–45, 65–87, and 94–116; these read LLLS…FFAA, IANF…ASLG, and TSVI…GSLS.

The protein belongs to the MscS (TC 1.A.23) family.

The protein localises to the cell membrane. This is an uncharacterized protein from Buchnera aphidicola subsp. Baizongia pistaciae (strain Bp).